A 185-amino-acid chain; its full sequence is Transcriptional repressor NrdR (185 aa).

Positions 1–24 are disordered; the sequence is MRCPFCGGPDTQVKDSRPSEDSSA. A zinc finger spans residues 3-34; the sequence is CPFCGGPDTQVKDSRPSEDSSAIRRRRVCPDC. The span at 12 to 24 shows a compositional bias: basic and acidic residues; sequence QVKDSRPSEDSSA. In terms of domain architecture, ATP-cone spans 49-139; sequence LVVLKRSGKR…VYKNFREAQD (91 aa). The segment at 149–185 is disordered; the sequence is ERLEGEGDLPEDGEAAPAPPDEVVAAPRRGRPARKRA. The span at 176-185 shows a compositional bias: basic residues; that stretch reads RRGRPARKRA.

Belongs to the NrdR family. Requires Zn(2+) as cofactor.

Functionally, negatively regulates transcription of bacterial ribonucleotide reductase nrd genes and operons by binding to NrdR-boxes. The polypeptide is Transcriptional repressor NrdR (Methylorubrum extorquens (strain PA1) (Methylobacterium extorquens)).